The sequence spans 42 residues: Photosystem II reaction center protein J (42 aa).

Residues 10-30 traverse the membrane as a helical segment; it reads IPLWIIGTLAGTLVIGLLAIF.

This sequence belongs to the PsbJ family. In terms of assembly, PSII is composed of 1 copy each of membrane proteins PsbA, PsbB, PsbC, PsbD, PsbE, PsbF, PsbH, PsbI, PsbJ, PsbK, PsbL, PsbM, PsbT, PsbX, PsbY, PsbZ, Psb30/Ycf12, at least 3 peripheral proteins of the oxygen-evolving complex and a large number of cofactors. It forms dimeric complexes.

It localises to the plastid. The protein resides in the chloroplast thylakoid membrane. One of the components of the core complex of photosystem II (PSII). PSII is a light-driven water:plastoquinone oxidoreductase that uses light energy to abstract electrons from H(2)O, generating O(2) and a proton gradient subsequently used for ATP formation. It consists of a core antenna complex that captures photons, and an electron transfer chain that converts photonic excitation into a charge separation. The polypeptide is Photosystem II reaction center protein J (Chaetosphaeridium globosum (Charophycean green alga)).